The sequence spans 307 residues: Heme A synthase (307 aa).

The Cytoplasmic portion of the chain corresponds to 1–8; sequence MQHNRYLK. A helical transmembrane segment spans residues 9–29; sequence WFAVAATVGMLLILLGGALVT. Residues 30 to 56 lie on the Extracellular side of the membrane; sequence KTDSGLGCGRNWPDCNGSLIPKEITPE. A disulfide bridge connects residues cysteine 37 and cysteine 44. A helical membrane pass occupies residues 57 to 77; sequence VLIEFSHRLVTGVVSISILVL. Glutamate 60 is a catalytic residue. Histidine 63 serves as a coordination point for heme o. Residues 78-92 are Cytoplasmic-facing; that stretch reads TVWTWRKLGHIREVK. Residues 93 to 113 traverse the membrane as a helical segment; sequence LLGFLAMFFLIAQALIGAAQV. Residues 114-123 lie on the Extracellular side of the membrane; that stretch reads LWGQGDFILA. Residues 124–144 form a helical membrane-spanning segment; sequence LHFGISLISFAAVLLLSMIVF. Residue histidine 125 participates in heme o binding. The Cytoplasmic segment spans residues 145 to 161; it reads EVDRKFDADNVFIGKKL. The helical transmembrane segment at 162–182 threads the bilayer; that stretch reads RWHTIAVTIYSYLVVYTGALV. The Extracellular segment spans residues 183-218; sequence RHTDSSLICPDWPFCYNETPLASPNNMYEWVQMGHR. Cysteines 191 and 197 form a disulfide. Histidine 217 serves as a coordination point for heme b. Residues 219 to 239 traverse the membrane as a helical segment; the sequence is LAVLIIFIWIAYITWHAVKEY. Over 240–247 the chain is Cytoplasmic; the sequence is KNQRVVYY. A helical transmembrane segment spans residues 248 to 268; that stretch reads GWIIAFTIVFLQVIAGMLVVL. Residues 269 to 276 lie on the Extracellular side of the membrane; that stretch reads TKLNLTVA. A helical membrane pass occupies residues 277–297; it reads LMHSLLISLLFGLLCYMIMLV. Residue histidine 279 participates in heme b binding. Residues 298–307 are Cytoplasmic-facing; that stretch reads ARSNYNEKMK.

The protein belongs to the COX15/CtaA family. Type 1 subfamily. As to quaternary structure, interacts with CtaB. The cofactor is heme b.

It is found in the cell membrane. The enzyme catalyses Fe(II)-heme o + 2 A + H2O = Fe(II)-heme a + 2 AH2. It functions in the pathway porphyrin-containing compound metabolism; heme A biosynthesis; heme A from heme O: step 1/1. Catalyzes the conversion of heme O to heme A by two successive hydroxylations of the methyl group at C8. The first hydroxylation forms heme I, the second hydroxylation results in an unstable dihydroxymethyl group, which spontaneously dehydrates, resulting in the formyl group of heme A. The sequence is that of Heme A synthase from Lysinibacillus sphaericus (strain C3-41).